A 314-amino-acid polypeptide reads, in one-letter code: Ribosomal RNA small subunit methyltransferase H (314 aa).

S-adenosyl-L-methionine is bound by residues 35-37 (GGH), aspartate 55, phenylalanine 79, aspartate 101, and glutamine 108. A disordered region spans residues 276–296 (QGGQTLKPVGKKLMPSEAEVA).

Belongs to the methyltransferase superfamily. RsmH family.

It is found in the cytoplasm. It catalyses the reaction cytidine(1402) in 16S rRNA + S-adenosyl-L-methionine = N(4)-methylcytidine(1402) in 16S rRNA + S-adenosyl-L-homocysteine + H(+). In terms of biological role, specifically methylates the N4 position of cytidine in position 1402 (C1402) of 16S rRNA. The chain is Ribosomal RNA small subunit methyltransferase H from Pectobacterium atrosepticum (strain SCRI 1043 / ATCC BAA-672) (Erwinia carotovora subsp. atroseptica).